A 207-amino-acid chain; its full sequence is Thiamine-phosphate synthase (207 aa).

4-amino-2-methyl-5-(diphosphooxymethyl)pyrimidine-binding positions include 38–42 (QYRAK) and asparagine 70. The Mg(2+) site is built by aspartate 71 and aspartate 90. 4-amino-2-methyl-5-(diphosphooxymethyl)pyrimidine is bound at residue threonine 109. 135–137 (TNS) is a 2-[(2R,5Z)-2-carboxy-4-methylthiazol-5(2H)-ylidene]ethyl phosphate binding site. Lysine 138 contacts 4-amino-2-methyl-5-(diphosphooxymethyl)pyrimidine. Residues glycine 165 and 185–186 (IS) each bind 2-[(2R,5Z)-2-carboxy-4-methylthiazol-5(2H)-ylidene]ethyl phosphate.

The protein belongs to the thiamine-phosphate synthase family. Requires Mg(2+) as cofactor.

The enzyme catalyses 2-[(2R,5Z)-2-carboxy-4-methylthiazol-5(2H)-ylidene]ethyl phosphate + 4-amino-2-methyl-5-(diphosphooxymethyl)pyrimidine + 2 H(+) = thiamine phosphate + CO2 + diphosphate. It carries out the reaction 2-(2-carboxy-4-methylthiazol-5-yl)ethyl phosphate + 4-amino-2-methyl-5-(diphosphooxymethyl)pyrimidine + 2 H(+) = thiamine phosphate + CO2 + diphosphate. The catalysed reaction is 4-methyl-5-(2-phosphooxyethyl)-thiazole + 4-amino-2-methyl-5-(diphosphooxymethyl)pyrimidine + H(+) = thiamine phosphate + diphosphate. Its pathway is cofactor biosynthesis; thiamine diphosphate biosynthesis; thiamine phosphate from 4-amino-2-methyl-5-diphosphomethylpyrimidine and 4-methyl-5-(2-phosphoethyl)-thiazole: step 1/1. Condenses 4-methyl-5-(beta-hydroxyethyl)thiazole monophosphate (THZ-P) and 2-methyl-4-amino-5-hydroxymethyl pyrimidine pyrophosphate (HMP-PP) to form thiamine monophosphate (TMP). In Clostridium perfringens (strain 13 / Type A), this protein is Thiamine-phosphate synthase.